The chain runs to 310 residues: MKVLWAALVVTLLAGCQADVEPEPEVQLGNEWAKWQAGQPWEQALGRFWNYLRWVQTLSDQVQEELLSTQATQELTALMEETMKEVKTYKAQLEQQLGPTAQETQARVSKELQAAQARLGADMEDVRNRLVQYRSELQAMMGQSTEELRGRLNSHLRKLRKRLLRDAEDLQKRLAVYQAGIREGAERSVNTLRERLRPLVEQAATVRSLISKPLQERAEAWGQRLRGRLEKVGTQAGDRLDEVREQVQEVRAKVEEQANQMRLQAEAFHARLKSWFEPLVQDMQQKWAELVEKVQLAVGTSPTSESSEKQ.

An N-terminal signal peptide occupies residues 1 to 18 (MKVLWAALVVTLLAGCQA). 4 consecutive repeat copies span residues 77–98 (ALME…QQLG), 99–120 (PTAQ…ARLG), 121–142 (ADME…AMMG), and 143–164 (QSTE…KRLL). The segment at 77–248 (ALMEETMKEV…RLDEVREQVQ (172 aa)) is 8 X 22 AA approximate tandem repeats. Residue Met140 is modified to Methionine sulfoxide. At Ser144 the chain carries Phosphoserine. The LDL and other lipoprotein receptors binding stretch occupies residues 155–165 (HLRKLRKRLLR). Position 159 to 162 (159 to 162 (LRKR)) interacts with heparin. Residues 165 to 186 (RDAEDLQKRLAVYQAGIREGAE) constitute a repeat. A run of 3 repeats spans residues 187-204 (RSVN…EQAA), 205-226 (TVRS…QRLR), and 227-248 (GRLE…EQVQ). Residues 203–283 (AATVRSLISK…SWFEPLVQDM (81 aa)) form a lipid-binding and lipoprotein association region. Heparin is bound at residue 222–229 (GQRLRGRL). The homooligomerization stretch occupies residues 259-310 (NQMRLQAEAFHARLKSWFEPLVQDMQQKWAELVEKVQLAVGTSPTSESSEKQ). Positions 271–283 (RLKSWFEPLVQDM) are specificity for association with VLDL.

The protein belongs to the apolipoprotein A1/A4/E family. As to quaternary structure, homotetramer. May interact with ABCA1; functionally associated with ABCA1 in the biogenesis of HDLs. May interact with APP/A4 amyloid-beta peptide; the interaction is extremely stable in vitro but its physiological significance is unclear. May interact with MAPT. May interact with MAP2. In the cerebrospinal fluid, interacts with secreted SORL1. Interacts with PMEL; this allows the loading of PMEL luminal fragment on ILVs to induce fibril nucleation. Post-translationally, APOE exists as multiple glycosylated and sialylated glycoforms within cells and in plasma. The extent of glycosylation and sialylation are tissue and context specific. In terms of processing, glycated in plasma VLDL. Phosphorylated by FAM20C in the extracellular medium.

Its subcellular location is the secreted. It localises to the extracellular space. It is found in the extracellular matrix. The protein localises to the extracellular vesicle. The protein resides in the endosome. Its subcellular location is the multivesicular body. In terms of biological role, APOE is an apolipoprotein, a protein associating with lipid particles, that mainly functions in lipoprotein-mediated lipid transport between organs via the plasma and interstitial fluids. APOE is a core component of plasma lipoproteins and is involved in their production, conversion and clearance. Apolipoproteins are amphipathic molecules that interact both with lipids of the lipoprotein particle core and the aqueous environment of the plasma. As such, APOE associates with chylomicrons, chylomicron remnants, very low density lipoproteins (VLDL) and intermediate density lipoproteins (IDL) but shows a preferential binding to high-density lipoproteins (HDL). It also binds a wide range of cellular receptors including the LDL receptor/LDLR, the LDL receptor-related proteins LRP1, LRP2 and LRP8 and the very low-density lipoprotein receptor/VLDLR that mediate the cellular uptake of the APOE-containing lipoprotein particles. Finally, APOE also has a heparin-binding activity and binds heparan-sulfate proteoglycans on the surface of cells, a property that supports the capture and the receptor-mediated uptake of APOE-containing lipoproteins by cells. A main function of APOE is to mediate lipoprotein clearance through the uptake of chylomicrons, VLDLs, and HDLs by hepatocytes. APOE is also involved in the biosynthesis by the liver of VLDLs as well as their uptake by peripheral tissues ensuring the delivery of triglycerides and energy storage in muscle, heart and adipose tissues. By participating in the lipoprotein-mediated distribution of lipids among tissues, APOE plays a critical role in plasma and tissues lipid homeostasis. APOE is also involved in two steps of reverse cholesterol transport, the HDLs-mediated transport of cholesterol from peripheral tissues to the liver, and thereby plays an important role in cholesterol homeostasis. First, it is functionally associated with ABCA1 in the biogenesis of HDLs in tissues. Second, it is enriched in circulating HDLs and mediates their uptake by hepatocytes. APOE also plays an important role in lipid transport in the central nervous system, regulating neuron survival and sprouting. In Tapirus terrestris (Lowland tapir), this protein is Apolipoprotein E (APOE).